The primary structure comprises 132 residues: Replication enhancer protein (132 aa).

It belongs to the geminiviridae replication enhancer protein family. Homooligomer. Interacts with the replication-associated protein (REP). Interacts with host proliferating cell nuclear antigen (PCNA). Interacts with host retinoblastoma-related protein 1 (RBR1), and may thereby deregulate the host cell cycle. Oligomerization and interaction with PCNA are necessary for optimal replication enhancement.

In terms of biological role, increases viral DNA accumulation. Enhances infectivity and symptom expression. This is Replication enhancer protein from Potato yellow mosaic virus (isolate Venezuela) (PYMV).